Here is a 657-residue protein sequence, read N- to C-terminus: Translation factor GUF1, mitochondrial (657 aa).

The transit peptide at 1–39 (MRGCLQSVKWLTSALRPSQSLASSTRYPRRLLSTSAPRN) directs the protein to the mitochondrion. The 181-residue stretch at 59–239 (ERFRNFCIVA…TVIEQIPAPV (181 aa)) folds into the tr-type G domain. Residues 121–128 (HQGEDYLL), 185–189 (INKVD), and 239–242 (VGDR) contribute to the GTP site.

It belongs to the TRAFAC class translation factor GTPase superfamily. Classic translation factor GTPase family. LepA subfamily.

Its subcellular location is the mitochondrion inner membrane. The enzyme catalyses GTP + H2O = GDP + phosphate + H(+). Its function is as follows. Promotes mitochondrial protein synthesis. May act as a fidelity factor of the translation reaction, by catalyzing a one-codon backward translocation of tRNAs on improperly translocated ribosomes. Binds to mitochondrial ribosomes in a GTP-dependent manner. The polypeptide is Translation factor GUF1, mitochondrial (Ajellomyces capsulatus (strain H143) (Darling's disease fungus)).